We begin with the raw amino-acid sequence, 427 residues long: Glutamate-1-semialdehyde 2,1-aminomutase (427 aa).

N6-(pyridoxal phosphate)lysine is present on Lys-267.

This sequence belongs to the class-III pyridoxal-phosphate-dependent aminotransferase family. HemL subfamily. As to quaternary structure, homodimer. Requires pyridoxal 5'-phosphate as cofactor.

Its subcellular location is the cytoplasm. The catalysed reaction is (S)-4-amino-5-oxopentanoate = 5-aminolevulinate. It participates in porphyrin-containing compound metabolism; protoporphyrin-IX biosynthesis; 5-aminolevulinate from L-glutamyl-tRNA(Glu): step 2/2. The sequence is that of Glutamate-1-semialdehyde 2,1-aminomutase from Syntrophotalea carbinolica (strain DSM 2380 / NBRC 103641 / GraBd1) (Pelobacter carbinolicus).